The sequence spans 926 residues: DNA mismatch repair protein MutS (926 aa).

A disordered region spans residues 1–60 (MAASQNPIQGSLFGGNEESDLNKAEKLKGSERSNVNLSHQQLKEDASLRPRIKQTPKNPN). Residues 20–31 (DLNKAEKLKGSE) show a composition bias toward basic and acidic residues. 726–733 (GPNASGKS) contributes to the ATP binding site.

The protein belongs to the DNA mismatch repair MutS family.

Its function is as follows. This protein is involved in the repair of mismatches in DNA. It is possible that it carries out the mismatch recognition step. This protein has a weak ATPase activity. The sequence is that of DNA mismatch repair protein MutS from Prochlorococcus marinus (strain NATL2A).